A 372-amino-acid chain; its full sequence is L-lysine 4-hydroxylase (372 aa).

Positions 176, 178, and 312 each coordinate Fe cation.

Belongs to the clavaminate synthase family. Requires Fe(2+) as cofactor.

It carries out the reaction L-lysine + 2-oxoglutarate + O2 = (4R)-4-hydroxy-L-lysine + succinate + CO2. Alpha-ketoglutarate-dependent dioxygenase that in vitro catalyzes the regio- and stereoselective hydroxylation of L-lysine, leading to (4R)-4-hydroxy-L-lysine. The chain is L-lysine 4-hydroxylase from Flavobacterium sp. (strain CF136).